A 194-amino-acid polypeptide reads, in one-letter code: Thiol:disulfide interchange protein CycY (194 aa).

The signal sequence occupies residues 1 to 37; that stretch reads MSEQSTSANPQRRTFLMVLPLIAFIGLALLFWFRLGS. In terms of domain architecture, Thioredoxin spans 46-190; the sequence is ALIGRPAPQT…LRSVLLPQME (145 aa). A disulfide bond links Cys92 and Cys95.

This sequence belongs to the thioredoxin family. DsbE subfamily.

The protein resides in the periplasm. Its function is as follows. Required for disulfide bond formation in some periplasmic proteins. Also acts as a disulfide oxidoreductase in cytochromes c biogenesis. The cysteines of apocytochromes c must be in the reduced state for covalent linkage between the two moieties to occur. The protein is Thiol:disulfide interchange protein CycY (cycY) of Bradyrhizobium diazoefficiens (strain JCM 10833 / BCRC 13528 / IAM 13628 / NBRC 14792 / USDA 110).